A 137-amino-acid polypeptide reads, in one-letter code: NADH-quinone oxidoreductase subunit A (137 aa).

The next 3 membrane-spanning stretches (helical) occupy residues 12-32 (WGFA…LGLS), 66-86 (FYLV…LFAW), and 95-115 (WTGF…LVYL).

The protein belongs to the complex I subunit 3 family. In terms of assembly, NDH-1 is composed of 13 different subunits. Subunits NuoA, H, J, K, L, M, N constitute the membrane sector of the complex.

It is found in the cell inner membrane. It catalyses the reaction a quinone + NADH + 5 H(+)(in) = a quinol + NAD(+) + 4 H(+)(out). NDH-1 shuttles electrons from NADH, via FMN and iron-sulfur (Fe-S) centers, to quinones in the respiratory chain. The immediate electron acceptor for the enzyme in this species is believed to be ubiquinone. Couples the redox reaction to proton translocation (for every two electrons transferred, four hydrogen ions are translocated across the cytoplasmic membrane), and thus conserves the redox energy in a proton gradient. The polypeptide is NADH-quinone oxidoreductase subunit A (Pseudomonas putida (strain ATCC 700007 / DSM 6899 / JCM 31910 / BCRC 17059 / LMG 24140 / F1)).